The primary structure comprises 391 residues: Imidazolonepropionase (391 aa).

Fe(3+) contacts are provided by His-72 and His-74. 2 residues coordinate Zn(2+): His-72 and His-74. 3 residues coordinate 4-imidazolone-5-propanoate: Arg-81, Tyr-139, and His-166. An N-formimidoyl-L-glutamate-binding site is contributed by Tyr-139. Fe(3+) is bound at residue His-229. Position 229 (His-229) interacts with Zn(2+). Gln-232 is a binding site for 4-imidazolone-5-propanoate. Asp-303 serves as a coordination point for Fe(3+). Asp-303 is a binding site for Zn(2+). N-formimidoyl-L-glutamate-binding residues include Asn-305 and Gly-307. A 4-imidazolone-5-propanoate-binding site is contributed by Ser-308.

It belongs to the metallo-dependent hydrolases superfamily. HutI family. It depends on Zn(2+) as a cofactor. Fe(3+) is required as a cofactor.

The protein resides in the cytoplasm. The catalysed reaction is 4-imidazolone-5-propanoate + H2O = N-formimidoyl-L-glutamate. Its pathway is amino-acid degradation; L-histidine degradation into L-glutamate; N-formimidoyl-L-glutamate from L-histidine: step 3/3. Its function is as follows. Catalyzes the hydrolytic cleavage of the carbon-nitrogen bond in imidazolone-5-propanoate to yield N-formimidoyl-L-glutamate. It is the third step in the universal histidine degradation pathway. The chain is Imidazolonepropionase from Streptomyces coelicolor (strain ATCC BAA-471 / A3(2) / M145).